Reading from the N-terminus, the 365-residue chain is Flagellar P-ring protein (365 aa).

An N-terminal signal peptide occupies residues 1–19; that stretch reads MIKFLSALILLLVTTAAQA.

The protein belongs to the FlgI family. As to quaternary structure, the basal body constitutes a major portion of the flagellar organelle and consists of four rings (L,P,S, and M) mounted on a central rod.

Its subcellular location is the periplasm. The protein localises to the bacterial flagellum basal body. Functionally, assembles around the rod to form the L-ring and probably protects the motor/basal body from shearing forces during rotation. The sequence is that of Flagellar P-ring protein from Shigella flexneri serotype 5b (strain 8401).